A 262-amino-acid polypeptide reads, in one-letter code: MATLLEKTRKITAILQDGVTDLQQELPYNSMTERLANVIDCNACVINTKGELLGYSLPYNTNNDRVDQFFYDRKLPDEYVRAAVRIYDTMANVPVDRPLAIFPEESLGDFPKGVTTLAPIYGSGMRLGTFIMWREDGEFTDDDLVLVELATTVIGVQLSNLKLEQMEENIRKDTMATMAVNTLSYSEMKAVKAIIEELDGEEGHVIASVIADKIGITRSVIVNALRKLESAGVIESRSLGMKGTYLKVLNTGLFDKLAGRNF.

The interval 1-159 (MATLLEKTRK…ATTVIGVQLS (159 aa)) is GAF domain. Residues 207 to 226 (ASVIADKIGITRSVIVNALR) constitute a DNA-binding region (H-T-H motif).

Belongs to the CodY family.

Its subcellular location is the cytoplasm. Functionally, DNA-binding global transcriptional regulator which is involved in the adaptive response to starvation and acts by directly or indirectly controlling the expression of numerous genes in response to nutrient availability. During rapid exponential growth, CodY is highly active and represses genes whose products allow adaptation to nutrient depletion. This chain is Global transcriptional regulator CodY, found in Lactococcus lactis subsp. lactis (strain IL1403) (Streptococcus lactis).